A 617-amino-acid chain; its full sequence is MAPGTAELEIDETLHLLRMVMQREFIHYLETLPGTKELFIDKCLLRPLDMIATSSDMKRHGVKRIMHFDLQKSPQVWNIEIDQRVFFLRPNVENARKIVEYVEESSENRSICVIWCNRQLEECDLAFESSGVIGHITQLSLNMCLLPLESDLFSLQHVESAQPDLFSVANMFVALQNLYGVIPTVYGLGSESKNLWNLVHALCSSNELRARPDQPISHLFLFDRQLDPVPVLLTGASYEGLLHEFFTIDCGKLAFPVDLRKQVQTGPLDFDWIEINPEEDKEAHQQNRGDTVKLDNCEDIFASIRNKHVTAALEFLHSKAKSIQKSIEKSSMIDDVADYRNFVEKDLRALKKDHKHCELHINACEMMMNKVKMEDYRTMFKLEHEMLLGTVTHEEYFDFVFERVPMRSCRDVVLSMMSLASLKLDGVPDDTYNEFVEMYLQKYGYEHMFELQNLRNSRVIYARRHIAHDRTISERARTWETLARKFRIVKGNEPMDMSNPSDMSYVFGARISPLLCKIVEDTIDHGWNQAEYERIIGKDKVLVEENTYIAADRRPDNRTRKAIMVFVNGGITYWEVAALRLLAIQKNFRILICTTHVIKKREYLEVRAKDASSVFGS.

It belongs to the STXBP/unc-18/SEC1 family. As to quaternary structure, probable core component of the class C core vacuole/endosome tethering (CORVET) complex. The common core is composed of the class C Vps proteins vps-11, vps-16 and vps-18, and which further associates with vps-8 and vps-33.2. Interacts with spe-39. In terms of tissue distribution, broadly expressed in somatic tissues including the pharynx, intestine, spermatheca, and in coelomocytes. Expressed in the lining of the gut lumen.

It is found in the early endosome. Its subcellular location is the late endosome membrane. The protein localises to the lysosome membrane. The protein resides in the cytoplasmic vesicle. It localises to the clathrin-coated vesicle. It is found in the recycling endosome. In terms of biological role, plays a role in vesicle-mediated protein trafficking to lysosomal compartments and in membrane docking/fusion reactions of late endosomes/lysosomes. Believed to act as a component of the putative CORVET endosomal tethering complex which is proposed to be involved in the rab-5-to-rab-7 endosome conversion probably implicating sand-1, and via binding SNAREs and SNARE complexes to mediate tethering and docking events during SNARE-mediated membrane fusion. The CORVET complex is proposed to function as a rab-5 effector to mediate early endosome fusion probably in specific endosome subpopulations. Most likely within the CORVET complex, it is involved in the fusion of endocytic compartments. Required for sperm development and function. This chain is Vacuolar protein sorting-associated protein 33B, found in Caenorhabditis elegans.